Here is a 271-residue protein sequence, read N- to C-terminus: ATP synthase subunit delta (271 aa).

The protein belongs to the ATPase delta chain family. In terms of assembly, F-type ATPases have 2 components, F(1) - the catalytic core - and F(0) - the membrane proton channel. F(1) has five subunits: alpha(3), beta(3), gamma(1), delta(1), epsilon(1). F(0) has three main subunits: a(1), b(2) and c(10-14). The alpha and beta chains form an alternating ring which encloses part of the gamma chain. F(1) is attached to F(0) by a central stalk formed by the gamma and epsilon chains, while a peripheral stalk is formed by the delta and b chains.

Its subcellular location is the cell membrane. F(1)F(0) ATP synthase produces ATP from ADP in the presence of a proton or sodium gradient. F-type ATPases consist of two structural domains, F(1) containing the extramembraneous catalytic core and F(0) containing the membrane proton channel, linked together by a central stalk and a peripheral stalk. During catalysis, ATP synthesis in the catalytic domain of F(1) is coupled via a rotary mechanism of the central stalk subunits to proton translocation. Its function is as follows. This protein is part of the stalk that links CF(0) to CF(1). It either transmits conformational changes from CF(0) to CF(1) or is implicated in proton conduction. The sequence is that of ATP synthase subunit delta from Renibacterium salmoninarum (strain ATCC 33209 / DSM 20767 / JCM 11484 / NBRC 15589 / NCIMB 2235).